The sequence spans 291 residues: Shikimate dehydrogenase (NADP(+)) (291 aa).

Residues 23–25 (SFS) and Thr-70 each bind shikimate. The Proton acceptor role is filled by Lys-74. Asn-95 and Asp-110 together coordinate shikimate. Residues 135 to 139 (GAGGA) and Leu-232 each bind NADP(+). Tyr-234 lines the shikimate pocket. Gly-255 provides a ligand contact to NADP(+).

Belongs to the shikimate dehydrogenase family. In terms of assembly, homodimer.

The catalysed reaction is shikimate + NADP(+) = 3-dehydroshikimate + NADPH + H(+). Its pathway is metabolic intermediate biosynthesis; chorismate biosynthesis; chorismate from D-erythrose 4-phosphate and phosphoenolpyruvate: step 4/7. Its function is as follows. Involved in the biosynthesis of the chorismate, which leads to the biosynthesis of aromatic amino acids. Catalyzes the reversible NADPH linked reduction of 3-dehydroshikimate (DHSA) to yield shikimate (SA). In Desulforamulus reducens (strain ATCC BAA-1160 / DSM 100696 / MI-1) (Desulfotomaculum reducens), this protein is Shikimate dehydrogenase (NADP(+)).